The chain runs to 91 residues: Small ribosomal subunit protein uS19 (91 aa).

The protein belongs to the universal ribosomal protein uS19 family.

In terms of biological role, protein S19 forms a complex with S13 that binds strongly to the 16S ribosomal RNA. This chain is Small ribosomal subunit protein uS19, found in Cupriavidus taiwanensis (strain DSM 17343 / BCRC 17206 / CCUG 44338 / CIP 107171 / LMG 19424 / R1) (Ralstonia taiwanensis (strain LMG 19424)).